Here is a 252-residue protein sequence, read N- to C-terminus: Vacuolar iron transporter 1 (252 aa).

The Cytoplasmic portion of the chain corresponds to 1-38 (MAAATDGGGLPLLADKAASHSHHHHPERHFTSGEVVRD). Residues 39-59 (VIMGVSDGLTVPFALAAGLSG) traverse the membrane as a helical segment. Residues 60 to 65 (ASAPSS) lie on the Vacuolar side of the membrane. A helical membrane pass occupies residues 66-86 (LVLTAGLAEVAAGAISMGLGG). Residues 87-170 (YLAAKSEADH…PDPKRAIQSA (84 aa)) lie on the Cytoplasmic side of the membrane. Residues 92–167 (SEADHYQREM…LEKPDPKRAI (76 aa)) form a cytoplasmic metal binding domain (MBD) region. Residues Glu-104, Glu-107, Glu-115, Glu-118, Met-151, and Glu-155 each contribute to the Fe cation site. Residues 171 to 191 (LTIALSYVIGGLVPLLPYMFI) form a helical membrane-spanning segment. Topologically, residues 192–196 (STAQN) are vacuolar. The chain crosses the membrane as a helical span at residues 197 to 217 (AMLTSVGVTLVALLFFGYIKG). Over 218 to 224 (RFTGNRP) the chain is Cytoplasmic. A helical transmembrane segment spans residues 225 to 245 (FLSAVQTAIIGALASAAAYGM). Over 246-252 (AKAVQTR) the chain is Vacuolar.

Belongs to the CCC1 family. Homodimer. The dimeric interaction is mediated by both the transmembrane domains (TMDs) and the cytoplasmic metal binding domain (MBD). In terms of tissue distribution, highly expressed in leaf blades. Expressed in leaf sheaths.

It localises to the vacuole membrane. The enzyme catalyses Fe(2+)(in) = Fe(2+)(out). Vacuolar iron transporter involved in the transfer of iron ions from the cytosol to the vacuole for intracellular iron storage. Vacuolar iron storage is required for seed embryo and seedling development. May be involved in the regulation of iron translocation between flag leaves and seeds. Can transport zinc ions from the cytosol to the vacuole. This chain is Vacuolar iron transporter 1, found in Oryza sativa subsp. japonica (Rice).